The primary structure comprises 536 residues: Heat shock factor protein 2 (536 aa).

Residues Lys2 and Lys82 each participate in a glycyl lysine isopeptide (Lys-Gly) (interchain with G-Cter in SUMO2) cross-link. A DNA-binding region spans residues 7-112; the sequence is VPAFLSKLWT…LLENIKRKVS (106 aa). Positions 108–122 match the Nuclear localization signal motif; sequence KRKVSSSKPEENKIR. The segment at 119 to 192 is hydrophobic repeat HR-A/B; the sequence is NKIRQEDLTK…VTLVQNNQLV (74 aa). Glycyl lysine isopeptide (Lys-Gly) (interchain with G-Cter in SUMO2) cross-links involve residues Lys135, Lys139, Lys151, Lys210, Lys218, and Lys237. The Nuclear localization signal motif lies at 195-210; sequence KRKRPLLLNTNGAQKK. A disordered region spans residues 300 to 337; the sequence is QSGEQNEPARESLSSGSDGSSPLMSSAVQLNGSSSLTS. Residues 311 to 325 are compositionally biased toward low complexity; the sequence is SLSSGSDGSSPLMSS. A compositionally biased stretch (polar residues) spans 326–337; that stretch reads AVQLNGSSSLTS. Positions 360-385 are hydrophobic repeat HR-C; the sequence is LLDYLDSIDCSLEDFQAMLSGRQFSI. The tract at residues 407 to 438 is disordered; sequence NNTKSENKGLETTKNNVVQPVSEEGRKSKSKP. Residues 429 to 438 show a composition bias toward basic and acidic residues; it reads EEGRKSKSKP.

Belongs to the HSF family. DNA-binding homotrimer in stressed or heat shocked cells, otherwise found as a homodimer.

The protein resides in the cytoplasm. It localises to the nucleus. DNA-binding protein that specifically binds heat shock promoter elements (HSE) and activates transcription. In higher eukaryotes, HSF is unable to bind to the HSE unless the cells are heat shocked. The polypeptide is Heat shock factor protein 2 (HSF2) (Homo sapiens (Human)).